The primary structure comprises 517 residues: Crotonobetaine/carnitine--CoA ligase (517 aa).

This sequence belongs to the ATP-dependent AMP-binding enzyme family.

The catalysed reaction is 4-(trimethylamino)butanoate + ATP + CoA = 4-(trimethylamino)butanoyl-CoA + AMP + diphosphate. It carries out the reaction crotonobetaine + ATP + CoA = crotonobetainyl-CoA + AMP + diphosphate. It catalyses the reaction (R)-carnitine + ATP + CoA = (R)-carnitinyl-CoA + AMP + diphosphate. It functions in the pathway amine and polyamine metabolism; carnitine metabolism. Functionally, catalyzes the transfer of CoA to carnitine, generating the initial carnitinyl-CoA needed for the CaiB reaction cycle. Also has activity toward crotonobetaine and gamma-butyrobetaine. In Salmonella paratyphi B (strain ATCC BAA-1250 / SPB7), this protein is Crotonobetaine/carnitine--CoA ligase.